An 825-amino-acid polypeptide reads, in one-letter code: Ubiquitin carboxyl-terminal hydrolase 16 (825 aa).

The interval 1–20 (MGKKRTKGRSAPDTVASESA) is disordered. The UBP-type zinc finger occupies 22–141 (PVCRHLRKGL…QVVDYVRKQA (120 aa)). Zn(2+) is bound by residues cysteine 24, histidine 26, cysteine 48, cysteine 51, cysteine 73, cysteine 76, cysteine 81, histidine 89, histidine 93, histidine 102, cysteine 115, and cysteine 118. Lysine 139 participates in a covalent cross-link: Glycyl lysine isopeptide (Lys-Gly) (interchain with G-Cter in SUMO2). Residues 164 to 180 (EKESKNEQEREKSENLA) show a composition bias toward basic and acidic residues. The segment at 164–184 (EKESKNEQEREKSENLAKETI) is disordered. The residue at position 188 (serine 188) is a Phosphoserine. The region spanning 195-824 (KGLSNLGNTC…QAYLLFYERI (630 aa)) is the USP domain. Residue cysteine 204 is the Nucleophile of the active site. Positions 393–407 (SGKKSINDKNVKMTM) are enriched in basic and acidic residues. The disordered stretch occupies residues 393 to 456 (SGKKSINDKN…KQAKNQRRQQ (64 aa)). Over residues 408–419 (EEEDKDSEEEKD) the composition is skewed to acidic residues. Serine 414 is subject to Phosphoserine. Positions 436–456 (HLQKKAKKQAKKQAKNQRRQQ) are enriched in basic residues. Serine 520 and serine 531 each carry phosphoserine. Histidine 759 functions as the Proton acceptor in the catalytic mechanism.

This sequence belongs to the peptidase C19 family. USP16 subfamily. As to quaternary structure, homotetramer. Associates with late pre-40S ribosomes. Interacts with CEP78; promoting deubiquitination of tektins. Post-translationally, phosphorylated at the onset of mitosis and dephosphorylated during the metaphase/anaphase transition. Phosphorylation by AURKB enhances the deubiquitinase activity.

It localises to the nucleus. Its subcellular location is the cytoplasm. It catalyses the reaction Thiol-dependent hydrolysis of ester, thioester, amide, peptide and isopeptide bonds formed by the C-terminal Gly of ubiquitin (a 76-residue protein attached to proteins as an intracellular targeting signal).. Functionally, specifically deubiquitinates 'Lys-120' of histone H2A (H2AK119Ub), a specific tag for epigenetic transcriptional repression, thereby acting as a coactivator. Deubiquitination of histone H2A is a prerequisite for subsequent phosphorylation at 'Ser-11' of histone H3 (H3S10ph), and is required for chromosome segregation when cells enter into mitosis. In resting B- and T-lymphocytes, phosphorylation by AURKB leads to enhance its activity, thereby maintaining transcription in resting lymphocytes. Regulates Hox gene expression via histone H2A deubiquitination. Prefers nucleosomal substrates. Does not deubiquitinate histone H2B. Also deubiquitinates non-histone proteins, such as ribosomal protein RPS27A: deubiquitination of monoubiquitinated RPS27A promotes maturation of the 40S ribosomal subunit. Also mediates deubiquitination of tektin proteins (TEKT1, TEKT2, TEK3, TEKT4 and TEKT5), promoting their stability. This Mus musculus (Mouse) protein is Ubiquitin carboxyl-terminal hydrolase 16 (Usp16).